An 88-amino-acid chain; its full sequence is Large ribosomal subunit protein bL27 (88 aa).

Positions 1-23 (MAHKKGTGSTRNGRDSNAQRLGV) are disordered. Positions 7-19 (TGSTRNGRDSNAQ) are enriched in polar residues.

This sequence belongs to the bacterial ribosomal protein bL27 family.

This is Large ribosomal subunit protein bL27 (rpmA) from Synechococcus elongatus (strain ATCC 33912 / PCC 7942 / FACHB-805) (Anacystis nidulans R2).